A 563-amino-acid polypeptide reads, in one-letter code: Cytochrome P450 monooxygenase efuG (563 aa).

The helical transmembrane segment at 10-30 threads the bilayer; it reads ITSHQWGIGSVFLLISIPLIV. Residues 462–482 form a disordered region; that stretch reads PDDPQSGPRKDAKKQKAKSDG. Cys505 is a heme binding site.

Belongs to the cytochrome P450 family. Heme is required as a cofactor.

Its subcellular location is the membrane. The protein operates within secondary metabolite biosynthesis; terpenoid biosynthesis. In terms of biological role, cytochrome P450 monooxygenase; part of the gene cluster that mediates the biosynthesis of enfumafungin, a glycosylated fernene-type triterpenoid with potent antifungal activity, mediated by its interaction with beta-1,3-glucan synthase and the fungal cell wall. The pathway begins with the terpene cyclase-glycosyl transferase fusion protein that most likely uses 2,3-oxidosqualene as substrate and catalyzes glycosylation immediately after cyclization. The fernene glycoside then could be processed by the desaturase efuI which catalyzes isomerization of a double bond established by efuA to form the core structure. The latter would then undergo a series of hydroxylations in unknown order at C-2, C-19, C-23 and C-25, which would be catalyzed by two of the three cytochrome P450 monooxygenases efuB, efuG or efuH. The hydroxy-group at C-25 becomes oxidized by the dehydrogenase efuE to enable a spontaneous, non-enzymatic hemiacetal formation with C-23. After hydroxylation at C-2, acetylation by the acetyltransferase efuC takes place. The final steps in enfumafungin biosynthesis require expansion of the 5-membered ring by lactonization via a Baeyer-Villiger reaction mediated by one of the BGC's cytochrome P450 monooxygenases (efuB, efuG or efuH) followed by ring cleavage. This type of reaction would establish a double bond between C-20 and C-21 which could be reduced by the reductase efuL to form the final product. This Hormonema carpetanum protein is Cytochrome P450 monooxygenase efuG.